A 116-amino-acid chain; its full sequence is Large ribosomal subunit protein bL17 (116 aa).

This sequence belongs to the bacterial ribosomal protein bL17 family. In terms of assembly, part of the 50S ribosomal subunit. Contacts protein L32.

The sequence is that of Large ribosomal subunit protein bL17 from Fusobacterium nucleatum subsp. nucleatum (strain ATCC 25586 / DSM 15643 / BCRC 10681 / CIP 101130 / JCM 8532 / KCTC 2640 / LMG 13131 / VPI 4355).